A 188-amino-acid polypeptide reads, in one-letter code: MDNKENKLDEKKIFKNNKIEEKKENLIDAITVQNQKIENLKLKLLQNQKKINDIELRKLANIENIKKNTEEKIEKIKKTEIERFLKSIIPVIDSLEDILNLSTTVDIKDQPIIKGIELTLESLLNILNKLGVKIEGQKNKVFNPDIHELVSRELSKETLPNHVISVNKKGFTFNKIVLRKASVIVAEN.

The protein belongs to the GrpE family. In terms of assembly, homodimer.

The protein resides in the cytoplasm. Its function is as follows. Participates actively in the response to hyperosmotic and heat shock by preventing the aggregation of stress-denatured proteins, in association with DnaK and GrpE. It is the nucleotide exchange factor for DnaK and may function as a thermosensor. Unfolded proteins bind initially to DnaJ; upon interaction with the DnaJ-bound protein, DnaK hydrolyzes its bound ATP, resulting in the formation of a stable complex. GrpE releases ADP from DnaK; ATP binding to DnaK triggers the release of the substrate protein, thus completing the reaction cycle. Several rounds of ATP-dependent interactions between DnaJ, DnaK and GrpE are required for fully efficient folding. The polypeptide is Protein GrpE 2 (Buchnera aphidicola subsp. Acyrthosiphon pisum (strain APS) (Acyrthosiphon pisum symbiotic bacterium)).